The sequence spans 396 residues: MLAANERPEAPTAIRIDLGAIFVSLELSRSKWLITSLSPGGGEKMSKHAVAADDIAGLLARFAELKRKARARTGRYFPTIVIQEAGLDGFWIHRVLQAEGIESHVVDPAPIPTSRRRRRAKTDKIDGETLVRALLAYKRGEPRVCAMLRVPTPEEEDRRRISRERKALTNERVRHVNRIKGLLFSQGVSGYQPLRRDRRTRLEELRTGDGRPLPTHLKAQVGRELDRLELLIGQIKAVEVERDAMLAAAPVGSAHFADCEQPAPAMLLALKGIGPEFAAVLWSEGLSRHFDNRRQVAAYAGLAPTPWQSGSVDHDQGVSKAGNPRLRTTLIQGAWLWLRHQPHSALSLWFKQRGKQNDGRLKKKKTIVALACKLLVALWKYVNAGVVIEGAVMKTP.

This sequence belongs to the transposase 20 family.

This Sinorhizobium fredii (strain NBRC 101917 / NGR234) protein is Putative transposase y4rJ.